The sequence spans 341 residues: Putative UPF0607 protein ENSP00000383144 (341 aa).

Disordered stretches follow at residues 70–131 (RLPK…NPRP) and 218–279 (LMVG…PPAK). Residues 72–101 (PKTEVRAEEPKEATEVKDQVETQEQEDNKR) are compositionally biased toward basic and acidic residues. Residues 108 to 127 (EAASTSRPLETQGNLTSSWY) are compositionally biased toward polar residues. Positions 243–252 (AGHRSHKRKL) are enriched in basic residues.

Belongs to the UPF0607 family.

The sequence is that of Putative UPF0607 protein ENSP00000383144 from Homo sapiens (Human).